The chain runs to 263 residues: Probable esterase PIR7A (263 aa).

The active-site Acyl-ester intermediate is Ser-82. Catalysis depends on charge relay system residues Asp-213 and His-241.

This sequence belongs to the AB hydrolase superfamily.

This is Probable esterase PIR7A (PIR7A) from Oryza sativa subsp. indica (Rice).